The chain runs to 149 residues: NPC intracellular cholesterol transporter 2 (149 aa).

Residues 1 to 19 form the signal peptide; that stretch reads MRFLAATILLLALVAASQA. 3 disulfide bridges follow: Cys-27/Cys-140, Cys-42/Cys-47, and Cys-93/Cys-99. Residues Asn-58 and Asn-69 are each glycosylated (N-linked (GlcNAc...) asparagine). N6-acetyllysine is present on Lys-116.

Belongs to the NPC2 family. Interacts with NPC1 (via the second lumenal domain) in a cholestrol-dependent manner. Interacts with NUS1/NgBR, the interaction stabilizes NCP2 and regulates cholesterol trafficking. Interacts with DHDDS. Interacts with NEDD4L (via C2 domain). Interacts with NPC1L1. In terms of processing, N-glycosylated. In terms of tissue distribution, detected in liver and bile. Detected in epididymis (at protein level). Detected in caput epididymis, corpus epididymis, cauda epididymis and ovary.

Its subcellular location is the secreted. It is found in the endoplasmic reticulum. It localises to the lysosome. It catalyses the reaction cholesterol(in) = cholesterol(out). In terms of biological role, intracellular cholesterol transporter which acts in concert with NPC1 and plays an important role in the egress of cholesterol from the lysosomal compartment. Unesterified cholesterol that has been released from LDLs in the lumen of the late endosomes/lysosomes is transferred by NPC2 to the cholesterol-binding pocket in the N-terminal domain of NPC1. May bind and mobilize cholesterol that is associated with membranes. NPC2 binds cholesterol with a 1:1 stoichiometry. Can bind a variety of sterols, including lathosterol, desmosterol and the plant sterols stigmasterol and beta-sitosterol. The secreted form of NCP2 regulates biliary cholesterol secretion via stimulation of ABCG5/ABCG8-mediated cholesterol transport. This chain is NPC intracellular cholesterol transporter 2, found in Mus musculus (Mouse).